A 540-amino-acid chain; its full sequence is Homoserine O-acetyltransferase (540 aa).

Residues 66 to 404 (NVILICHALT…QHGHDAFLLE (339 aa)) form the AB hydrolase-1 domain. Residue S171 is the Nucleophile of the active site. Substrate is bound at residue R240. The interval 262–284 (QDTDKSGIKGTTGTEGKNSSEIS) is disordered. Residues D365 and H398 contribute to the active site. D399 is a binding site for substrate. 2 CBS domains span residues 425 to 484 (MNRN…ELDE) and 486 to 540 (ITRD…GKYD).

It belongs to the AB hydrolase superfamily. MetX family. As to quaternary structure, homodimer.

The protein resides in the cytoplasm. It carries out the reaction L-homoserine + acetyl-CoA = O-acetyl-L-homoserine + CoA. Its pathway is amino-acid biosynthesis; L-methionine biosynthesis via de novo pathway; O-acetyl-L-homoserine from L-homoserine: step 1/1. In terms of biological role, transfers an acetyl group from acetyl-CoA to L-homoserine, forming acetyl-L-homoserine. In vitro, can also use propionyl-CoA or butiryl-CoA as acyl donor. This chain is Homoserine O-acetyltransferase, found in Methanosarcina acetivorans (strain ATCC 35395 / DSM 2834 / JCM 12185 / C2A).